The following is a 501-amino-acid chain: Beta-secretase 1 (501 aa).

The N-terminal stretch at 1–21 is a signal peptide; that stretch reads MAPALHWLLLWVGSGMLPAQG. A propeptide spanning residues 22 to 45 is cleaved from the precursor; sequence THLGIRLPLRSGLAGPPLGLRLPR. Over 22 to 457 the chain is Extracellular; that stretch reads THLGIRLPLR…PQTDESTLMT (436 aa). Positions 39-58 are disordered; it reads LGLRLPRETDEESEEPGRRG. A Peptidase A1 domain is found at 75-416; sequence YYVEMTVGSP…DRARKRIGFA (342 aa). Residue D93 is part of the active site. K126 is subject to N6-acetyllysine. Residues N153, N172, and N223 are each glycosylated (N-linked (GlcNAc...) asparagine). Intrachain disulfides connect C216–C420, C278–C443, and C330–C380. N6-acetyllysine is present on residues K275, K279, and K285. Residue D289 is part of the active site. An N6-acetyllysine mark is found at K299, K300, and K307. The N-linked (GlcNAc...) asparagine glycan is linked to N354. A helical transmembrane segment spans residues 458-478; sequence IAYVMAAICALFMLPLCLMVC. Residues C474, C478, C482, and C485 are each lipidated (S-palmitoyl cysteine). Over 479 to 501 the chain is Cytoplasmic; sequence QWRCLRCLRHQHDDFADDISLLK. An interaction with RTN3 region spans residues 479–501; sequence QWRCLRCLRHQHDDFADDISLLK. The short motif at 496–500 is the DXXLL element; the sequence is DISLL. S498 is modified (phosphoserine). K501 is covalently cross-linked (Glycyl lysine isopeptide (Lys-Gly) (interchain with G-Cter in ubiquitin)).

It belongs to the peptidase A1 family. As to quaternary structure, monomer. Interacts (via DXXLL motif) with GGA1, GGA2 and GGA3 (via their VHS domain); the interaction highly increases when BACE1 is phosphorylated at Ser-498. Interacts with RTN1; RTN2; RTN3 and RTN4; the interaction leads to inhibition of amyloid precursor protein processing. Interacts with SNX6. Interacts with PCSK9. Interacts with NAT8 and NAT8B. Interacts with BIN1. Interacts (via extracellular domain) with ADAM10 (via extracellular domain). Interacts with SORL1; this interaction may affect binding with APP and hence reduce APP cleavage. Interacts with NRDC AND NRG1. In terms of processing, N-Glycosylated. Addition of a bisecting N-acetylglucosamine by MGAT3 blocks lysosomal targeting, further degradation and is required for maintaining stability under stress conditions. Palmitoylation mediates lipid raft localization. Post-translationally, acetylated in the endoplasmic reticulum at Lys-126, Lys-275, Lys-279, Lys-285, Lys-299, Lys-300 and Lys-307. Acetylation by NAT8 and NAT8B is transient and deacetylation probably occurs in the Golgi. Acetylation regulates the maturation, the transport to the plasma membrane, the stability and the expression of the protein. In terms of processing, ubiquitinated at Lys-501, ubiquitination leads to lysosomal degradation. Monoubiquitinated and 'Lys-63'-linked polyubitinated. Deubiquitnated by USP8; inhibits lysosomal degradation. Phosphorylation at Ser-498 is required for interaction with GGA1 and retrograded transport from endosomal compartments to the trans-Golgi network. Non-phosphorylated BACE1 enters a direct recycling route to the cell surface. In terms of tissue distribution, expressed in the brain, specifically in neurons and astrocytes (at protein level).

The protein resides in the cell membrane. It localises to the golgi apparatus. The protein localises to the trans-Golgi network. It is found in the endoplasmic reticulum. Its subcellular location is the endosome. The protein resides in the late endosome. It localises to the early endosome. The protein localises to the cell surface. It is found in the cytoplasmic vesicle membrane. Its subcellular location is the membrane raft. The protein resides in the lysosome. It localises to the recycling endosome. The protein localises to the cell projection. It is found in the axon. Its subcellular location is the dendrite. It catalyses the reaction Broad endopeptidase specificity. Cleaves Glu-Val-Asn-Leu-|-Asp-Ala-Glu-Phe in the Swedish variant of Alzheimer's amyloid precursor protein.. Its activity is regulated as follows. Inhibited by RTN3 and RTN4. In terms of biological role, responsible for the proteolytic processing of the amyloid precursor protein (APP). Cleaves at the N-terminus of the A-beta peptide sequence, between residues 671 and 672 of APP, leads to the generation and extracellular release of beta-cleaved soluble APP, and a corresponding cell-associated C-terminal fragment which is later released by gamma-secretase. Cleaves CHL1. This Mus musculus (Mouse) protein is Beta-secretase 1.